Here is a 316-residue protein sequence, read N- to C-terminus: Ribosomal RNA small subunit methyltransferase H (316 aa).

Residues 35 to 37 (GGH), Asp55, Phe79, Asp101, and Gln108 each bind S-adenosyl-L-methionine.

This sequence belongs to the methyltransferase superfamily. RsmH family.

It localises to the cytoplasm. It catalyses the reaction cytidine(1402) in 16S rRNA + S-adenosyl-L-methionine = N(4)-methylcytidine(1402) in 16S rRNA + S-adenosyl-L-homocysteine + H(+). Specifically methylates the N4 position of cytidine in position 1402 (C1402) of 16S rRNA. The protein is Ribosomal RNA small subunit methyltransferase H of Vibrio proteolyticus (Aeromonas proteolytica).